We begin with the raw amino-acid sequence, 124 residues long: NADH-quinone oxidoreductase subunit A (124 aa).

A run of 3 helical transmembrane segments spans residues 11–31, 68–88, and 93–113; these read YLPI…IMIL, LVAI…PWAI, and IGKI…IGFV.

It belongs to the complex I subunit 3 family. As to quaternary structure, NDH-1 is composed of 14 different subunits. Subunits NuoA, H, J, K, L, M, N constitute the membrane sector of the complex.

It is found in the cell inner membrane. The enzyme catalyses a quinone + NADH + 5 H(+)(in) = a quinol + NAD(+) + 4 H(+)(out). Functionally, NDH-1 shuttles electrons from NADH, via FMN and iron-sulfur (Fe-S) centers, to quinones in the respiratory chain. The immediate electron acceptor for the enzyme in this species is believed to be ubiquinone. Couples the redox reaction to proton translocation (for every two electrons transferred, four hydrogen ions are translocated across the cytoplasmic membrane), and thus conserves the redox energy in a proton gradient. This Rickettsia bellii (strain RML369-C) protein is NADH-quinone oxidoreductase subunit A.